The sequence spans 1382 residues: Hepatocyte growth factor receptor (1382 aa).

The N-terminal stretch at 1–24 (MKASAVLAPGILALLFTLVQGSDG) is a signal peptide. Residues 25 to 935 (ECHEALAKSE…VQPDQNFTGL (911 aa)) are Extracellular-facing. The Sema domain maps to 27 to 516 (HEALAKSEMN…TGKRITKIPL (490 aa)). Asn-45, Asn-100, and Asn-106 each carry an N-linked (GlcNAc...) asparagine glycan. Intrachain disulfides connect Cys-95–Cys-101, Cys-98–Cys-160, Cys-133–Cys-141, and Cys-173–Cys-176. N-linked (GlcNAc...) asparagine glycans are attached at residues Asn-203 and Asn-359. 2 cysteine pairs are disulfide-bonded: Cys-299-Cys-364 and Cys-386-Cys-398. Asn-400 and Asn-406 each carry an N-linked (GlcNAc...) asparagine glycan. 4 disulfides stabilise this stretch: Cys-521–Cys-539, Cys-527–Cys-562, Cys-530–Cys-546, and Cys-542–Cys-552. IPT/TIG domains follow at residues 564-656 (PAIH…FSYV), 658-740 (PVIT…FSYQ), and 743-837 (PVVY…LIYV). Thr-583 is a glycosylation site (O-linked (Man) threonine). Asn-608 and Asn-636 each carry an N-linked (GlcNAc...) asparagine glycan. Residues Thr-677 and Thr-762 are each glycosylated (O-linked (Man) threonine). N-linked (GlcNAc...) asparagine glycans are attached at residues Asn-786, Asn-880, and Asn-931. A helical membrane pass occupies residues 936 to 956 (IVGVVSISIILLLLLGLFLWM). Residues 957 to 1382 (KKRKQIKDLG…QDNINGEVDT (426 aa)) are Cytoplasmic-facing. Ser-967 bears the Phosphoserine mark. Residue Thr-978 is modified to Phosphothreonine. Residues Ser-991, Ser-998, and Ser-1001 each carry the phosphoserine modification. Tyr-1004 bears the Phosphotyrosine mark. The Protein kinase domain occupies 1079 to 1346 (VHFNEVIGRG…RISAIFSTFI (268 aa)). ATP-binding positions include 1085–1093 (IGRGHFGCV) and Lys-1111. Asp-1205 (proton acceptor) is an active-site residue. Residues 1213–1382 (LDEKFTVKVA…QDNINGEVDT (170 aa)) are interaction with RANBP9. The residue at position 1231 (Tyr-1231) is a Phosphotyrosine. Phosphotyrosine; by autocatalysis occurs at positions 1235 and 1236. Thr-1290 bears the Phosphothreonine mark. The interaction with MUC20 stretch occupies residues 1321–1360 (WHPKAEMRPSFSELVSRISAIFSTFIGEHYVHVNATYVNV). A phosphotyrosine; by autocatalysis mark is found at Tyr-1350 and Tyr-1357. A Phosphotyrosine modification is found at Tyr-1366.

Belongs to the protein kinase superfamily. Tyr protein kinase family. Heterodimer made of an alpha chain (50 kDa) and a beta chain (145 kDa) which are disulfide linked. Binds PLXNB1. Interacts when phosphorylated with downstream effectors including STAT3, PIK3R1, SRC, PCLG1, GRB2 and GAB1. Interacts with SPSB1, SPSB2 and SPSB4. Interacts with INPP5D/SHIP1. When phosphorylated at Tyr-1357, interacts with INPPL1/SHIP2. Interacts with RANBP9 and RANBP10, as well as SPSB1, SPSB2, SPSB3 and SPSB4. SPSB1 binding occurs in the presence and in the absence of HGF, however HGF treatment has a positive effect on this interaction. Interacts with MUC20; prevents interaction with GRB2 and suppresses hepatocyte growth factor-induced cell proliferation. Interacts with GRB10. Interacts with PTPN1 and PTPN2. Interacts with HSP90AA1 and HSP90AB1; the interaction suppresses MET kinase activity. Interacts with tensin TNS3. Interacts (when phosphorylated) with tensin TNS4 (via SH2 domain); the interaction increases MET protein stability by inhibiting MET endocytosis and subsequent lysosomal degradation. Post-translationally, autophosphorylated in response to ligand binding on Tyr-1235 and Tyr-1236 in the kinase domain leading to further phosphorylation of Tyr-1350 and Tyr-1357 in the C-terminal multifunctional docking site. Dephosphorylated by PTPRJ at Tyr-1350 and Tyr-1366. Dephosphorylated by PTPN1 and PTPN2. Ubiquitinated. Ubiquitination by CBL regulates the receptor stability and activity through proteasomal degradation. In terms of processing, O-mannosylation of IPT/TIG domains by TMEM260 is required for protein maturation. O-mannosylated residues are composed of single mannose glycans that are not elongated or modified.

The protein resides in the membrane. It catalyses the reaction L-tyrosyl-[protein] + ATP = O-phospho-L-tyrosyl-[protein] + ADP + H(+). With respect to regulation, in its inactive state, the C-terminal tail interacts with the catalytic domain and inhibits the kinase activity. Upon ligand binding, the C-terminal tail is displaced and becomes phosphorylated, thus increasing the kinase activity. Receptor tyrosine kinase that transduces signals from the extracellular matrix into the cytoplasm by binding to hepatocyte growth factor/HGF ligand. Regulates many physiological processes including proliferation, scattering, morphogenesis and survival. Ligand binding at the cell surface induces autophosphorylation of MET on its intracellular domain that provides docking sites for downstream signaling molecules. Following activation by ligand, interacts with the PI3-kinase subunit PIK3R1, PLCG1, SRC, GRB2, STAT3 or the adapter GAB1. Recruitment of these downstream effectors by MET leads to the activation of several signaling cascades including the RAS-ERK, PI3 kinase-AKT, or PLCgamma-PKC. The RAS-ERK activation is associated with the morphogenetic effects while PI3K/AKT coordinates prosurvival effects. During embryonic development, MET signaling plays a role in gastrulation, development and migration of muscles and neuronal precursors, angiogenesis and kidney formation. In adults, participates in wound healing as well as organ regeneration and tissue remodeling. Also promotes differentiation and proliferation of hematopoietic cells. This is Hepatocyte growth factor receptor (MET) from Microcebus murinus (Gray mouse lemur).